Reading from the N-terminus, the 872-residue chain is Trichohyalin-like protein 1 (872 aa).

In terms of domain architecture, EF-hand spans 46-81; the sequence is CAIHAVERNLNLLNIDSNGAISFDEFVLAIFSFLNV. Positions 117 to 127 are enriched in polar residues; that stretch reads QWTEGTSQTQD. Disordered stretches follow at residues 117–759, 774–813, and 830–872; these read QWTE…ERGA, LQQT…DSSD, and EFLP…APKQ. Basic and acidic residues-rich tracts occupy residues 142–155, 164–190, 218–235, 296–307, 324–348, 365–375, 399–435, and 486–505; these read SLEE…RVDP, LPVE…KVDQ, TKGE…DILA, GKDEPSSEHVDL, AAKD…ETRD, RVERKGVRGPE, EDKK…KDSE, and SGEK…KEDD. Positions 538-570 are enriched in polar residues; the sequence is NSETSDLFVQGDSQSQTNPFRGSVQGSDSNNPE. Composition is skewed to basic and acidic residues over residues 571 to 584, 592 to 608, and 664 to 684; these read TQKH…KRVQ, RGED…EHEG, and TKKD…KEED. Composition is skewed to polar residues over residues 699 to 708 and 718 to 729; these read ENNAVSQKTC and SPQQLAGEQSLS. Over residues 730–751 the composition is skewed to basic and acidic residues; sequence TKEHDPSVSESGLEERMQRDQE. Polar residues-rich tracts occupy residues 774–793 and 801–812; these read LQQT…TASV and NQSSASLTNDSS. Residues 849-865 are compositionally biased toward basic and acidic residues; it reads LEDKQGRPQREELEPQK.

This sequence belongs to the S-100 family.

This Bos taurus (Bovine) protein is Trichohyalin-like protein 1 (TCHHL1).